A 491-amino-acid polypeptide reads, in one-letter code: UDP-N-acetylmuramate--L-alanine ligase (491 aa).

Residue 126 to 132 coordinates ATP; the sequence is GTHGKTT.

The protein belongs to the MurCDEF family.

It is found in the cytoplasm. The catalysed reaction is UDP-N-acetyl-alpha-D-muramate + L-alanine + ATP = UDP-N-acetyl-alpha-D-muramoyl-L-alanine + ADP + phosphate + H(+). It functions in the pathway cell wall biogenesis; peptidoglycan biosynthesis. In terms of biological role, cell wall formation. This chain is UDP-N-acetylmuramate--L-alanine ligase, found in Shigella boydii serotype 18 (strain CDC 3083-94 / BS512).